Reading from the N-terminus, the 342-residue chain is MLDERAKTLLKTLVERYIADGQPVGSRTLSRASGLELSPATIRNVMADLEELGLIASPHTSAGRIPTARGYRLFVDTMLTARPLDMARSEPGLAAAQEQLQPDQPQRVITHAAQVLSNLSQFVGVVTAPRKAGVFHHIEFMRLGERRVLVILVSPDGDVQNRVIFTARDHSPAELVEASNFINAHYSGLSIEAVRERLKTEIDALRGEIALLMQAAVQFGSEAADGENEQVVVSGERNLLTMQDFSSDMGSLRKLFDLFEQKTQLMRLLDVSSRAEGVRIYIGGESQIVPFEELSVVSAPYEVDGKIVGTLGVIGPTRMAYDRMIQIVDITSRLVTQALSQK.

This sequence belongs to the HrcA family.

Functionally, negative regulator of class I heat shock genes (grpE-dnaK-dnaJ and groELS operons). Prevents heat-shock induction of these operons. This Methylibium petroleiphilum (strain ATCC BAA-1232 / LMG 22953 / PM1) protein is Heat-inducible transcription repressor HrcA.